Consider the following 189-residue polypeptide: Probable hydrogen peroxide-inducible genes activator (189 aa).

The HTH lysR-type domain occupies 8 to 65 (PTLAGLRAFAAVAEKQHFGSAASALGVNQSTLSQALAGLESGLGVRLIERSTRRVFLT). The H-T-H motif DNA-binding region spans 25–44 (FGSAASALGVNQSTLSQALA).

Belongs to the LysR transcriptional regulatory family.

Required for the induction the katG gene for catalase. Involved in the response to hydrogen peroxide. The sequence is that of Probable hydrogen peroxide-inducible genes activator (oxyR) from Mycobacterium xenopi.